The primary structure comprises 420 residues: Zinc finger protein 362 (420 aa).

3 disordered regions span residues 1 to 28 (MSRSSPSGKGHSRMAEPRFNNPYFWPPP), 54 to 80 (RPPHLPPTSASSQQPLLVPPAPAESSQ), and 115 to 155 (VTGL…SQSR). Residues 121–154 (STRTPSVSTSESSAGAGTGTGTSTPSTPTTTSQS) show a composition bias toward low complexity. Position 162 is a phosphothreonine (Thr-162). The segment at 178 to 202 (TIQGHGLLGPPKSERGRKKIKAENP) is disordered. Residue Lys-198 forms a Glycyl lysine isopeptide (Lys-Gly) (interchain with G-Cter in SUMO2) linkage. C2H2-type zinc fingers lie at residues 227–249 (YRCKVCPLTFFTKSEMQIHSKSH), 255–277 (HKCPHCSKSFANASYLAQHLRIH), 283–305 (YHCSYCDKSFRQLSHLQQHTRIH), 311–335 (YKCPHPGCEKAFTQLSNLQSHQRQH), 341–363 (YKCPNCYRAYSDSASLQIHLSAH), and 371–393 (YCCSMCGRAYTSETYLMKHMSKH). Ser-404 bears the Phosphoserine mark.

Belongs to the krueppel C2H2-type zinc-finger protein family.

Its subcellular location is the nucleus. Its function is as follows. May be involved in transcriptional regulation. This is Zinc finger protein 362 (ZNF362) from Homo sapiens (Human).